Reading from the N-terminus, the 146-residue chain is Ribosome-binding factor A (146 aa).

Residues 121–146 (KQQQFGSADDVTENDIDEADDTEGKA) are disordered. Residues 130 to 146 (DVTENDIDEADDTEGKA) are compositionally biased toward acidic residues.

The protein belongs to the RbfA family. In terms of assembly, monomer. Binds 30S ribosomal subunits, but not 50S ribosomal subunits or 70S ribosomes.

The protein resides in the cytoplasm. Its function is as follows. One of several proteins that assist in the late maturation steps of the functional core of the 30S ribosomal subunit. Associates with free 30S ribosomal subunits (but not with 30S subunits that are part of 70S ribosomes or polysomes). Required for efficient processing of 16S rRNA. May interact with the 5'-terminal helix region of 16S rRNA. The sequence is that of Ribosome-binding factor A from Shewanella sp. (strain MR-4).